A 520-amino-acid polypeptide reads, in one-letter code: RNA polymerase sigma factor sigA (520 aa).

The transit peptide at 1-66 (MTATPAVIGL…APATPKLTAV (66 aa)) directs the protein to the chloroplast. Residues 37–49 (GGGGGGGGGGGGD) are compositionally biased toward gly residues. 3 disordered regions span residues 37 to 57 (GGGG…APPA), 87 to 117 (HHSS…AHAH), and 171 to 190 (SVSA…TKNG). The span at 96–108 (APPPPPPPPPTPS) shows a compositional bias: pro residues. Residues 175–187 (RQRRMSGRRRGRT) are compositionally biased toward basic residues. Residues 305 to 318 (DLIQGGLIGLLRGI) carry the Polymerase core binding motif. The segment at residues 479–498 (WEDISRQFGLSRERVRQVGL) is a DNA-binding region (H-T-H motif).

The protein belongs to the sigma-70 factor family. Expressed in shoots. Expressed in the tips of fully elongated leaves. Expressed in leaf blades.

It is found in the plastid. The protein resides in the chloroplast. In terms of biological role, sigma factors are initiation factors that promote the attachment of plastid-encoded RNA polymerase (PEP) to specific initiation sites and are then released. Controls the transcription of the psaA and psaB genes in chloroplast, and thus maintains the abundance of the core protein complex PsaA-PsaB of photosystem I (PSI) in the thylakoid membrane. Maintains PSI activity, sufficient rate of electron transfer from PSII to PSI, and photochemical efficiency. The polypeptide is RNA polymerase sigma factor sigA (Oryza sativa subsp. japonica (Rice)).